Here is an 802-residue protein sequence, read N- to C-terminus: Copper-exporting P-type ATPase (802 aa).

HMA domains follow at residues 5 to 70 (KKTT…YGVT) and 72 to 138 (ETVE…YDAS). Cys16, Cys19, Cys83, and Cys86 together coordinate Cu(+). Helical transmembrane passes span 161 to 181 (LIIS…HLFN), 192 to 212 (WFQF…FYVG), 224 to 244 (MDVL…YEMV), 256 to 276 (LYFE…YLEA), 411 to 431 (YFVP…ITLV), and 438 to 458 (PALV…LGLA). Asp495 acts as the 4-aspartylphosphate intermediate in catalysis. Mg(2+) contacts are provided by Asp690 and Asp694. 2 helical membrane passes run 748–767 (LFWA…LGLL) and 771–790 (VAGA…ALRL).

Belongs to the cation transport ATPase (P-type) (TC 3.A.3) family. Type IB subfamily.

It localises to the cell membrane. The catalysed reaction is Cu(+)(in) + ATP + H2O = Cu(+)(out) + ADP + phosphate + H(+). Functionally, involved in copper export. This Staphylococcus aureus (strain N315) protein is Copper-exporting P-type ATPase (copA).